The primary structure comprises 129 residues: Lysozyme C (129 aa).

One can recognise a C-type lysozyme domain in the interval 1–129; it reads KVYGRCELAA…VHAWIRGCRL (129 aa). 4 disulfide bridges follow: Cys-6/Cys-127, Cys-30/Cys-115, Cys-64/Cys-80, and Cys-76/Cys-94. Active-site residues include Glu-35 and Asp-52.

The protein belongs to the glycosyl hydrolase 22 family. In terms of assembly, monomer.

It is found in the secreted. The enzyme catalyses Hydrolysis of (1-&gt;4)-beta-linkages between N-acetylmuramic acid and N-acetyl-D-glucosamine residues in a peptidoglycan and between N-acetyl-D-glucosamine residues in chitodextrins.. Its function is as follows. Lysozymes have primarily a bacteriolytic function; those in tissues and body fluids are associated with the monocyte-macrophage system and enhance the activity of immunoagents. This is Lysozyme C (LYZ) from Lophophorus impejanus (Himalayan monal pheasant).